A 395-amino-acid polypeptide reads, in one-letter code: Multidrug resistance protein MdtL (395 aa).

Helical transmembrane passes span 4–24 (FLLC…MYLV), 42–62 (IAFS…GKIA), 69–89 (PVAI…SRAS), 93–113 (LFLS…VVAF), 131–151 (LLNG…HLIM), 158–178 (SLFY…LFIL), 217–237 (VSVI…VMGF), 247–267 (ALTA…LGLF), 271–291 (TLML…SLAH), 295–315 (VTLF…GVAM), 328–350 (VASS…LAAI), and 355–377 (AMNM…IFSV).

This sequence belongs to the major facilitator superfamily. DHA1 family. MdtL (TC 2.A.1.2.22) subfamily.

It localises to the cell inner membrane. This Salmonella dublin (strain CT_02021853) protein is Multidrug resistance protein MdtL.